The following is a 329-amino-acid chain: MDAVKKAILGEVLEEEEAYEVMRALMAGEVSPVRAAGLLVALSLRGERPHEIAAMARAMREAARPLRVHRRPLLDIVGTGGDGKGLMNLSTLAALVAAAGGVAVAKHGNRAASSRAGSADLLEALGVDLEAPPERVGEAIEELGFGFLFARVFHPAMRHVAPVRAELGVRTVFNLLGPLTNPAGADAYVLGVFSPEWLAPMAEALERLGARGLVVHGEGADELVLGENRVVEVGKGAYALTPEEVGLKRAPLEALKGGGPEENAALARRLLKGEEKGPLADAVALAAGAGFYAAGKTPSLKEGVALAREVLASGEAYLLLERYVAFLRA.

5-phospho-alpha-D-ribose 1-diphosphate is bound by residues Gly78, 81–82 (GD), 88–91 (NLST), 106–114 (KHGNRAASS), and Ser118. Residue Gly78 coordinates anthranilate. Ser90 serves as a coordination point for Mg(2+). Residue Asn109 participates in anthranilate binding. Arg164 is an anthranilate binding site. Asp221 and Glu222 together coordinate Mg(2+).

It belongs to the anthranilate phosphoribosyltransferase family. Homodimer. Mg(2+) serves as cofactor.

The enzyme catalyses N-(5-phospho-beta-D-ribosyl)anthranilate + diphosphate = 5-phospho-alpha-D-ribose 1-diphosphate + anthranilate. It participates in amino-acid biosynthesis; L-tryptophan biosynthesis; L-tryptophan from chorismate: step 2/5. Functionally, catalyzes the transfer of the phosphoribosyl group of 5-phosphorylribose-1-pyrophosphate (PRPP) to anthranilate to yield N-(5'-phosphoribosyl)-anthranilate (PRA). The chain is Anthranilate phosphoribosyltransferase from Thermus thermophilus (strain ATCC BAA-163 / DSM 7039 / HB27).